A 213-amino-acid chain; its full sequence is ATP phosphoribosyltransferase (213 aa).

The protein belongs to the ATP phosphoribosyltransferase family. Short subfamily. In terms of assembly, heteromultimer composed of HisG and HisZ subunits.

The protein resides in the cytoplasm. It carries out the reaction 1-(5-phospho-beta-D-ribosyl)-ATP + diphosphate = 5-phospho-alpha-D-ribose 1-diphosphate + ATP. The protein operates within amino-acid biosynthesis; L-histidine biosynthesis; L-histidine from 5-phospho-alpha-D-ribose 1-diphosphate: step 1/9. Its function is as follows. Catalyzes the condensation of ATP and 5-phosphoribose 1-diphosphate to form N'-(5'-phosphoribosyl)-ATP (PR-ATP). Has a crucial role in the pathway because the rate of histidine biosynthesis seems to be controlled primarily by regulation of HisG enzymatic activity. In Thermoanaerobacter pseudethanolicus (strain ATCC 33223 / 39E) (Clostridium thermohydrosulfuricum), this protein is ATP phosphoribosyltransferase.